The chain runs to 499 residues: Ammonium transporter MEP2 (499 aa).

At 1-31 the chain is on the extracellular side; sequence MSYNFTGTPTGEGTGGNSLTTDLNTQFDLAN. An N-linked (GlcNAc...) asparagine glycan is attached at Asn4. The helical transmembrane segment at 32–52 threads the bilayer; that stretch reads MGWIGVASAGVWIMVPGIGLL. Topologically, residues 53-62 are cytoplasmic; it reads YSGLSRKKHA. The helical transmembrane segment at 63-83 threads the bilayer; the sequence is LSLLWASMMASAVCIFQWFFW. Residues 84–122 are Extracellular-facing; sequence GYSLAFSHNTRGNGFIGTLEFFGFRNVLGAPSSVSSLPD. Residues 123-143 traverse the membrane as a helical segment; it reads ILFAVYQGMFAAVTGALMLGG. The Cytoplasmic portion of the chain corresponds to 144 to 152; sequence ACERARLFP. The helical transmembrane segment at 153 to 173 threads the bilayer; the sequence is MMVFLFLWMTIVYCPIACWVW. At 174-187 the chain is on the extracellular side; sequence NAEGWLVKLGSLDY. The helical transmembrane segment at 188 to 208 threads the bilayer; the sequence is AGGLCVHLTSGHGGLVYALIL. Residues 209–230 are Cytoplasmic-facing; that stretch reads GKRNDPVTRKGMPKYKPHSVTS. Residues 231-251 traverse the membrane as a helical segment; it reads VVLGTVFLWFGWMFFNGGSAG. The Extracellular portion of the chain corresponds to 252–257; that stretch reads NATIRA. A helical transmembrane segment spans residues 258 to 278; that stretch reads WYSIMSTNLAAACGGLTWMVI. The Cytoplasmic portion of the chain corresponds to 279–289; it reads DYFRCGRKWTT. The chain crosses the membrane as a helical span at residues 290-312; sequence VGLCSGIIAGLVGITPAAGFVPI. At 313-315 the chain is on the extracellular side; sequence WSA. The chain crosses the membrane as a helical span at residues 316-338; it reads VVIGVVTGAGCNLAVDLKSLLRI. Over 339–346 the chain is Cytoplasmic; the sequence is DDGLDCYS. A helical transmembrane segment spans residues 347-367; the sequence is IHGVGGCIGSVLTGIFAADYV. Topologically, residues 368 to 393 are extracellular; it reads NATAGSYISPIDGGWINHHYKQVGYQ. Residues 394 to 414 form a helical membrane-spanning segment; sequence LAGICAALAWTVTVTSILLLT. Topologically, residues 415–499 are cytoplasmic; that stretch reads MNAIPFLKLR…SSTKNTDHIV (85 aa). Positions 428–441 are enhancer domain; the sequence is DEEELGTDAAQIGE. Residues 442–449 form a linker domain region; sequence FTYEESTA. Residues 450–485 are autoinhibitory domain; the sequence is YIPEPIRSKTSAQMPPPHENIDDKIVGNTDAEKNST. Positions 455 to 499 are disordered; the sequence is IRSKTSAQMPPPHENIDDKIVGNTDAEKNSTPSDASSTKNTDHIV. Position 457 is a phosphoserine (Ser457). Basic and acidic residues predominate over residues 468–482; the sequence is ENIDDKIVGNTDAEK. The segment covering 483 to 493 has biased composition (polar residues); that stretch reads NSTPSDASSTK.

Belongs to the ammonia transporter channel (TC 1.A.11.2) family. In terms of processing, phosphorylated at Ser-457 by the TORC1 effector kinase NPR1 under nitrogen-limiting conditions which causes a conformational change in the C-terminal region (CTR) to form an open active conformation. Supplementation of nitrogen source leads to inactivation and instant Ser-457 dephosphorylation via plasma membrane PSR1 and PSR2 redundant phosphatases. The residue Asn-4 of the protein's N-terminal tail is the only site that is glycosylated.

It is found in the cell membrane. Functionally, transporter for ammonium (both charged and uncharged NH3 and NH4) to use as a nitrogen source. The affinity of MEP2 is about twenty times higher than that of MEP1. MEP3 has the lowest affinity. Under ammonium limitation acts as an ammonium sensor, generating a signal that leads to pseudohyphal (filamentous) growth. The sequence is that of Ammonium transporter MEP2 from Saccharomyces cerevisiae (strain ATCC 204508 / S288c) (Baker's yeast).